The primary structure comprises 261 residues: Indole-3-glycerol phosphate synthase (261 aa).

Belongs to the TrpC family.

It catalyses the reaction 1-(2-carboxyphenylamino)-1-deoxy-D-ribulose 5-phosphate + H(+) = (1S,2R)-1-C-(indol-3-yl)glycerol 3-phosphate + CO2 + H2O. The protein operates within amino-acid biosynthesis; L-tryptophan biosynthesis; L-tryptophan from chorismate: step 4/5. The sequence is that of Indole-3-glycerol phosphate synthase from Burkholderia thailandensis (strain ATCC 700388 / DSM 13276 / CCUG 48851 / CIP 106301 / E264).